An 853-amino-acid chain; its full sequence is Leucine-rich repeat and death domain-containing protein 1 (853 aa).

The disordered stretch occupies residues 1–78 (MSEDGSNVEP…EEKNTGIPFS (78 aa)). Residues 19-31 (LEEPGSEISDLLD) are compositionally biased toward acidic residues. Over residues 56-65 (QSAASFTSQL) the composition is skewed to polar residues. LRR repeat units follow at residues 133–157 (MKSD…IVKV), 159–180 (YVKY…DPGD), 183–204 (GLEI…IQLF), 206–227 (NLKI…LLQL), 229–251 (NMRQ…EHLR), 252–274 (YLET…SSLK), 275–297 (NLRI…CFLP), 298–319 (KLNS…VREL), 321–342 (NLES…IFQL), 344–365 (KIKE…IENF), 367–388 (ELRL…ISHC), 390–411 (NLES…IRKL), 413–435 (NLRQ…SHLS), 436–457 (NIHI…IKNC), 459–481 (KITR…CALQ), 482–503 (SLDY…MSFS), 505–527 (QLLH…CSLT), 528–549 (NLEY…ISAM), 551–573 (SLHV…CSLK), 574–596 (NLRV…SKLK), 597–618 (RIQK…LCQL), 620–641 (TLEE…PEEV), 646–668 (QLKI…GELR), 669–690 (SLVS…FLSL), 692–713 (VLQS…IYKL), and 715–736 (SLKE…ICKG). One can recognise a Death domain in the interval 757–845 (LEKIFNIVAN…DIMDKITALN (89 aa)).

The protein is Leucine-rich repeat and death domain-containing protein 1 (Lrrd1) of Mus musculus (Mouse).